A 412-amino-acid chain; its full sequence is Multifunctional CCA protein (412 aa).

ATP-binding residues include Gly8 and Arg11. 2 residues coordinate CTP: Gly8 and Arg11. Mg(2+) is bound by residues Asp21 and Asp23. 3 residues coordinate ATP: Arg91, Arg137, and Arg140. Arg91, Arg137, and Arg140 together coordinate CTP. One can recognise an HD domain in the interval Thr228–Trp329.

It belongs to the tRNA nucleotidyltransferase/poly(A) polymerase family. Bacterial CCA-adding enzyme type 1 subfamily. As to quaternary structure, monomer. Can also form homodimers and oligomers. It depends on Mg(2+) as a cofactor. Ni(2+) serves as cofactor.

It carries out the reaction a tRNA precursor + 2 CTP + ATP = a tRNA with a 3' CCA end + 3 diphosphate. It catalyses the reaction a tRNA with a 3' CCA end + 2 CTP + ATP = a tRNA with a 3' CCACCA end + 3 diphosphate. Functionally, catalyzes the addition and repair of the essential 3'-terminal CCA sequence in tRNAs without using a nucleic acid template. Adds these three nucleotides in the order of C, C, and A to the tRNA nucleotide-73, using CTP and ATP as substrates and producing inorganic pyrophosphate. tRNA 3'-terminal CCA addition is required both for tRNA processing and repair. Also involved in tRNA surveillance by mediating tandem CCA addition to generate a CCACCA at the 3' terminus of unstable tRNAs. While stable tRNAs receive only 3'-terminal CCA, unstable tRNAs are marked with CCACCA and rapidly degraded. The sequence is that of Multifunctional CCA protein from Shigella flexneri serotype 5b (strain 8401).